The sequence spans 445 residues: MMLQCAPKKNERLRGSCDFCTQSKLRCNKNKPSCRRCTLQQQPCVYSVARRTGRPPKHPRKANDCQEANGQHGDQDPVTSTPGGSYQQQSNHLLDVEGDGANFTLADASTTAQGRETAASPALDNALLVGETFGFSSLLDDPLIQSDDFFSFSLCMPPGEKEGHMASPRTLNGSTGPCSPTVLSSIDVPHLPGRFGFLESSVESGLHGRTRPHLVEQPDKTVPSSFSEIEKIYDEGLTFSGLDSAINAVTNNGKGEPNISGTMAAHPHSKRQCFCSTSMSKLQMLVLHPTLCQKNSRARFDMALFLEEVVFSIYRDVLQCLVCQSKSLHSLASLCICTDWVIEALRDVAQDLSSGQDNLGGFRAGLYPPKDKFSICVGRFVLDDQLRESCTRSLVRYRLRKLIPIMDTMMKLNHRGAGGALSQAIRTMVEDVHHKIESALGMMEL.

The zn(2)-C6 fungal-type DNA-binding region spans 17-44 (CDFCTQSKLRCNKNKPSCRRCTLQQQPC). A disordered region spans residues 50 to 89 (RRTGRPPKHPRKANDCQEANGQHGDQDPVTSTPGGSYQQQ). Residues 51 to 60 (RTGRPPKHPR) are compositionally biased toward basic residues. The segment covering 77 to 89 (PVTSTPGGSYQQQ) has biased composition (polar residues).

It is found in the nucleus. Transcription factor that regulates the expression of the gene clusters that mediate the biosynthesis of the host-selective toxins (HSTs) AF-toxins responsible for Alternaria black spot of strawberry disease by the strawberry pathotype. On cellular level, AF-toxins affect plasma membrane of susceptible cells and cause a sudden increase in loss of K(+) after a few minutes of toxin treatment. In Alternaria alternata (Alternaria rot fungus), this protein is Transcription activator AFTR-1.